A 540-amino-acid polypeptide reads, in one-letter code: Berberine bridge enzyme-like 16 (540 aa).

The signal sequence occupies residues methionine 1–serine 24. The cysteines at positions 38 and 101 are disulfide-linked. Asparagine 59 is a glycosylation site (N-linked (GlcNAc...) asparagine). The region spanning serine 79–valine 254 is the FAD-binding PCMH-type domain. Positions histidine 116 to cysteine 178 form a cross-link, 6-(S-cysteinyl)-8alpha-(pros-histidyl)-FAD (His-Cys). N-linked (GlcNAc...) asparagine glycans are attached at residues asparagine 325 and asparagine 496.

This sequence belongs to the oxygen-dependent FAD-linked oxidoreductase family. FAD is required as a cofactor. The FAD cofactor is bound via a bicovalent 6-S-cysteinyl, 8alpha-N1-histidyl FAD linkage.

It localises to the secreted. The protein localises to the cell wall. This chain is Berberine bridge enzyme-like 16, found in Arabidopsis thaliana (Mouse-ear cress).